Here is a 156-residue protein sequence, read N- to C-terminus: Ribosomal RNA large subunit methyltransferase H (156 aa).

S-adenosyl-L-methionine-binding positions include leucine 73, glycine 104, and 123 to 128 (ISSMTL).

Belongs to the RNA methyltransferase RlmH family. Homodimer.

It is found in the cytoplasm. It catalyses the reaction pseudouridine(1915) in 23S rRNA + S-adenosyl-L-methionine = N(3)-methylpseudouridine(1915) in 23S rRNA + S-adenosyl-L-homocysteine + H(+). Its function is as follows. Specifically methylates the pseudouridine at position 1915 (m3Psi1915) in 23S rRNA. This is Ribosomal RNA large subunit methyltransferase H from Burkholderia vietnamiensis (strain G4 / LMG 22486) (Burkholderia cepacia (strain R1808)).